A 425-amino-acid polypeptide reads, in one-letter code: Tyrosine--tRNA ligase (425 aa).

Residue tyrosine 37 coordinates L-tyrosine. Residues 42-51 (PTADSLHLGH) carry the 'HIGH' region motif. Residues tyrosine 175 and glutamine 179 each contribute to the L-tyrosine site. The 'KMSKS' region signature appears at 235 to 239 (KFGKT). Lysine 238 lines the ATP pocket. The S4 RNA-binding domain occupies 357–415 (QDLQQALVNAELAPSRGQARKLIEAKSVSINGSLQTDAEYTFGEDDRLFGQYTLLRRGK).

Belongs to the class-I aminoacyl-tRNA synthetase family. TyrS type 1 subfamily. Homodimer.

It localises to the cytoplasm. The enzyme catalyses tRNA(Tyr) + L-tyrosine + ATP = L-tyrosyl-tRNA(Tyr) + AMP + diphosphate + H(+). Functionally, catalyzes the attachment of tyrosine to tRNA(Tyr) in a two-step reaction: tyrosine is first activated by ATP to form Tyr-AMP and then transferred to the acceptor end of tRNA(Tyr). This chain is Tyrosine--tRNA ligase, found in Erwinia tasmaniensis (strain DSM 17950 / CFBP 7177 / CIP 109463 / NCPPB 4357 / Et1/99).